The chain runs to 61 residues: Small ribosomal subunit protein uS14B (61 aa).

Zn(2+) contacts are provided by Cys-24, Cys-27, Cys-40, and Cys-43.

Belongs to the universal ribosomal protein uS14 family. Zinc-binding uS14 subfamily. Part of the 30S ribosomal subunit. Contacts proteins S3 and S10. The cofactor is Zn(2+).

Functionally, binds 16S rRNA, required for the assembly of 30S particles and may also be responsible for determining the conformation of the 16S rRNA at the A site. This is Small ribosomal subunit protein uS14B from Streptomyces avermitilis (strain ATCC 31267 / DSM 46492 / JCM 5070 / NBRC 14893 / NCIMB 12804 / NRRL 8165 / MA-4680).